Consider the following 152-residue polypeptide: Protein SprT-like (152 aa).

One can recognise a SprT-like domain in the interval 7-148 (QRLVEEVSLQ…GKCKGKLNLI (142 aa)). H67 is a binding site for Zn(2+). Residue E68 is part of the active site. Residue H71 participates in Zn(2+) binding.

Belongs to the SprT family. It depends on Zn(2+) as a cofactor.

It is found in the cytoplasm. The sequence is that of Protein SprT-like from Bacillus anthracis (strain A0248).